We begin with the raw amino-acid sequence, 847 residues long: Ras GTPase-activating protein 2 (847 aa).

Residues 1 to 18 (MAAAAPAAAALTEAPAVP) show a composition bias toward low complexity. A disordered region spans residues 1-31 (MAAAAPAAAALTEAPAVPGTAEPETGDEDSR). Position 2 is an N-acetylalanine (Ala-2). C2 domains follow at residues 19-137 (GTAE…ETWF) and 148-288 (VQGK…QAWY). The region spanning 371–588 (NKLVPFITAV…TDVKKFLDEI (218 aa)) is the Ras-GAP domain. Ser-554 is modified (phosphoserine). One can recognise a PH domain in the interval 603–704 (VHLKEGEMYK…WIDMLCRVSR (102 aa)). The Btk-type zinc-finger motif lies at 706 to 742 (NHNRLSSFHPSAYLNGNWLCCQETSEGTPGCKPCTAG). Residues His-714, Cys-725, Cys-726, and Cys-736 each coordinate Zn(2+). A disordered region spans residues 819–847 (DEPHEKYRKKRSSSAKYGSKENPIVGKIS).

In terms of tissue distribution, widely expressed. Higher expression in brain, placenta, and kidney.

The protein resides in the cell membrane. Inhibitory regulator of the Ras-cyclic AMP pathway. May bind inositol tetrakisphosphate (IP4) and phospholipids. This is Ras GTPase-activating protein 2 (Rasa2) from Rattus norvegicus (Rat).